The primary structure comprises 157 residues: 6,7-dimethyl-8-ribityllumazine synthase (157 aa).

Residues F22, 56-58 (AFE), and 81-83 (VLI) each bind 5-amino-6-(D-ribitylamino)uracil. 86–87 (ET) provides a ligand contact to (2S)-2-hydroxy-3-oxobutyl phosphate. The active-site Proton donor is the H89. F114 lines the 5-amino-6-(D-ribitylamino)uracil pocket. Residue R128 coordinates (2S)-2-hydroxy-3-oxobutyl phosphate.

It belongs to the DMRL synthase family.

It catalyses the reaction (2S)-2-hydroxy-3-oxobutyl phosphate + 5-amino-6-(D-ribitylamino)uracil = 6,7-dimethyl-8-(1-D-ribityl)lumazine + phosphate + 2 H2O + H(+). It functions in the pathway cofactor biosynthesis; riboflavin biosynthesis; riboflavin from 2-hydroxy-3-oxobutyl phosphate and 5-amino-6-(D-ribitylamino)uracil: step 1/2. Functionally, catalyzes the formation of 6,7-dimethyl-8-ribityllumazine by condensation of 5-amino-6-(D-ribitylamino)uracil with 3,4-dihydroxy-2-butanone 4-phosphate. This is the penultimate step in the biosynthesis of riboflavin. This Chlamydia muridarum (strain MoPn / Nigg) protein is 6,7-dimethyl-8-ribityllumazine synthase.